We begin with the raw amino-acid sequence, 41 residues long: Photosystem II reaction center protein L (41 aa).

A helical membrane pass occupies residues 20–40 (SLYLGLLLVFVVGLLFSSYFL).

Belongs to the PsbL family. As to quaternary structure, PSII is composed of 1 copy each of membrane proteins PsbA, PsbB, PsbC, PsbD, PsbE, PsbF, PsbH, PsbI, PsbJ, PsbK, PsbL, PsbM, PsbT, PsbX, PsbY, PsbZ, Psb30/Ycf12, peripheral proteins PsbO, CyanoQ (PsbQ), PsbU, PsbV and a large number of cofactors. It forms dimeric complexes.

The protein localises to the cellular thylakoid membrane. In terms of biological role, one of the components of the core complex of photosystem II (PSII). PSII is a light-driven water:plastoquinone oxidoreductase that uses light energy to abstract electrons from H(2)O, generating O(2) and a proton gradient subsequently used for ATP formation. It consists of a core antenna complex that captures photons, and an electron transfer chain that converts photonic excitation into a charge separation. This subunit is found at the monomer-monomer interface and is required for correct PSII assembly and/or dimerization. This Synechococcus sp. (strain JA-3-3Ab) (Cyanobacteria bacterium Yellowstone A-Prime) protein is Photosystem II reaction center protein L.